A 365-amino-acid chain; its full sequence is 3-methyl-L-tyrosine peroxygenase (365 aa).

313–317 (HIGVC) serves as a coordination point for heme.

The cofactor is heme.

The catalysed reaction is 3-methyl-L-tyrosine + H2O2 = 5-hydroxy-3-methyl-L-tyrosine + H2O. It functions in the pathway antibiotic biosynthesis. Its function is as follows. Heme-containing peroxygenase that mediates the hydroxylation of 3-methyl-L-tyrosine (3-Me-Tyr) into 3-hydroxy-5-methyl-L-tyrosine (3-OH-5-Me-Tyr) in biosynthesis of saframycin A, a potent antitumor antibiotic that belongs to the tetrahydroisoquinoline family. Involved in biosynthesis of 3-hydroxy-5-methyl-O-methyltyrosine (3-OH-5-Me-OMe-Tyr), a core structure of saframycin A. This is 3-methyl-L-tyrosine peroxygenase from Streptomyces lavendulae.